The chain runs to 170 residues: Small ribosomal subunit protein bS16 (170 aa).

The segment at 109–170 (ALAEAEGGPS…AAESEAPAAE (62 aa)) is disordered. Over residues 131–150 (AKKDEQPTEKAAEPAAEKAA) the composition is skewed to basic and acidic residues. Residues 151–170 (EPAAEAPAEAAAESEAPAAE) are compositionally biased toward low complexity.

It belongs to the bacterial ribosomal protein bS16 family.

In Mycolicibacterium gilvum (strain PYR-GCK) (Mycobacterium gilvum (strain PYR-GCK)), this protein is Small ribosomal subunit protein bS16.